Here is a 426-residue protein sequence, read N- to C-terminus: D-tagatose-1,6-bisphosphate aldolase subunit KbaZ (426 aa).

The protein belongs to the GatZ/KbaZ family. KbaZ subfamily. In terms of assembly, forms a complex with KbaY.

The protein operates within carbohydrate metabolism; D-tagatose 6-phosphate degradation; D-glyceraldehyde 3-phosphate and glycerone phosphate from D-tagatose 6-phosphate: step 2/2. Functionally, component of the tagatose-1,6-bisphosphate aldolase KbaYZ that is required for full activity and stability of the Y subunit. Could have a chaperone-like function for the proper and stable folding of KbaY. When expressed alone, KbaZ does not show any aldolase activity. The chain is D-tagatose-1,6-bisphosphate aldolase subunit KbaZ from Escherichia coli (strain K12 / MC4100 / BW2952).